Consider the following 325-residue polypeptide: Flotillin-like protein FloA (325 aa).

A run of 2 helical transmembrane segments spans residues 4 to 24 (LGIV…FSFI) and 26 to 46 (VGLW…TLVA).

The protein belongs to the flotillin-like FloA family. As to quaternary structure, homooligomerizes.

The protein resides in the cell membrane. It localises to the membrane raft. Its function is as follows. Found in functional membrane microdomains (FMM) that may be equivalent to eukaryotic membrane rafts. FMMs are highly dynamic and increase in number as cells age. Flotillins are thought to be important factors in membrane fluidity. The sequence is that of Flotillin-like protein FloA from Thermus thermophilus (strain ATCC BAA-163 / DSM 7039 / HB27).